A 163-amino-acid chain; its full sequence is Ribosome maturation factor RimP (163 aa).

Belongs to the RimP family.

It is found in the cytoplasm. In terms of biological role, required for maturation of 30S ribosomal subunits. The chain is Ribosome maturation factor RimP from Streptococcus mutans serotype c (strain ATCC 700610 / UA159).